A 346-amino-acid chain; its full sequence is Annexin A1 (346 aa).

Residue A2 is modified to N-acetylalanine. S5 carries the phosphoserine; by TRPM7 modification. Residue Q19 forms an Isoglutamyl lysine isopeptide (Gln-Lys) (interchain with K-?) linkage. Y21 is modified (phosphotyrosine; by EGFR). S27 bears the Phosphoserine; by PKC mark. A phosphoserine mark is found at S34 and S37. A Phosphothreonine modification is found at T41. Annexin repeat units follow at residues 42–113 (FNPS…ALLK), 114–185 (TPAQ…SLAK), 197–269 (DLAD…AIVK), and 273–344 (SKPA…ALCG). An N6-acetyllysine modification is found at K58. 11 residues coordinate Ca(2+): G59, V60, E62, K97, L100, E105, M127, G129, G131, T132, and E134. T136 carries the post-translational modification Phosphothreonine. Ca(2+) is bound by residues D171, G210, and R213. K214 participates in a covalent cross-link: Glycyl lysine isopeptide (Lys-Gly) (interchain with G-Cter in SUMO1); alternate. K214 participates in a covalent cross-link: Glycyl lysine isopeptide (Lys-Gly) (interchain with G-Cter in SUMO2); alternate. Ca(2+) is bound at residue G215. Position 239 is an N6-acetyllysine (K239). Residues D253, E255, and L256 each contribute to the Ca(2+) site. A Glycyl lysine isopeptide (Lys-Gly) (interchain with G-Cter in SUMO1) cross-link involves residue K257. Residues E261, M286, G288, and G290 each coordinate Ca(2+). K312 is subject to N6-acetyllysine. A disulfide bridge links C324 with C343. Positions 328, 330, and 331 each coordinate Ca(2+). Residue K332 forms a Glycyl lysine isopeptide (Lys-Gly) (interchain with G-Cter in SUMO1) linkage. E336 is a Ca(2+) binding site.

It belongs to the annexin family. Homodimer; non-covalently linked. Homodimer; linked by transglutamylation. Homodimers linked by transglutamylation are observed in placenta, but not in other tissues. Interacts with S100A11. Heterotetramer, formed by two molecules each of S100A11 and ANXA1. Interacts with DYSF. Interacts with EGFR. In terms of processing, phosphorylated by protein kinase C, EGFR and TRPM7. Phosphorylated in response to EGF treatment. Sumoylated. Post-translationally, proteolytically cleaved by cathepsin CTSG to release the active N-terminal peptide Ac2-26.

It localises to the nucleus. The protein resides in the cytoplasm. It is found in the cell projection. Its subcellular location is the cilium. The protein localises to the basolateral cell membrane. It localises to the lateral cell membrane. The protein resides in the cell membrane. It is found in the apical cell membrane. Its subcellular location is the membrane. The protein localises to the early endosome. It localises to the cytoplasmic vesicle membrane. The protein resides in the endosome membrane. It is found in the secreted. Its subcellular location is the extracellular space. The protein localises to the extracellular exosome. It localises to the cytoplasmic vesicle. The protein resides in the secretory vesicle lumen. It is found in the phagocytic cup. In terms of biological role, plays important roles in the innate immune response as effector of glucocorticoid-mediated responses and regulator of the inflammatory process. Has anti-inflammatory activity. Plays a role in glucocorticoid-mediated down-regulation of the early phase of the inflammatory response. Contributes to the adaptive immune response by enhancing signaling cascades that are triggered by T-cell activation, regulates differentiation and proliferation of activated T-cells. Promotes the differentiation of T-cells into Th1 cells and negatively regulates differentiation into Th2 cells. Has no effect on unstimulated T-cells. Negatively regulates hormone exocytosis via activation of the formyl peptide receptors and reorganization of the actin cytoskeleton. Has high affinity for Ca(2+) and can bind up to eight Ca(2+) ions. Displays Ca(2+)-dependent binding to phospholipid membranes. Plays a role in the formation of phagocytic cups and phagosomes. Plays a role in phagocytosis by mediating the Ca(2+)-dependent interaction between phagosomes and the actin cytoskeleton. Its function is as follows. Functions at least in part by activating the formyl peptide receptors and downstream signaling cascades. Promotes chemotaxis of granulocytes and monocytes via activation of the formyl peptide receptors. Promotes rearrangement of the actin cytoskeleton, cell polarization and cell migration. Promotes resolution of inflammation and wound healing. Acts via neutrophil N-formyl peptide receptors to enhance the release of CXCL2. In Pan troglodytes (Chimpanzee), this protein is Annexin A1 (ANXA1).